The sequence spans 319 residues: Olfactory receptor 5B21 (319 aa).

Topologically, residues 1–26 (MTSMENITEVTEFILLGLTDDPNLQV) are extracellular. Asn-6 carries N-linked (GlcNAc...) asparagine glycosylation. Residues 27-47 (PLLLIFLFIYLVTLIGNGGMM) traverse the membrane as a helical segment. Over 48–55 (VIIFSDSH) the chain is Cytoplasmic. A helical membrane pass occupies residues 56 to 76 (LHTPMYFFLSNLSFVDLGYSS). The Extracellular segment spans residues 77–100 (AVAPKMVAALQSGNKVISYNGCAA). The cysteines at positions 98 and 190 are disulfide-linked. A helical transmembrane segment spans residues 101-121 (QFFFFVGFATVECYLLASMAY). At 122–134 (DRHAAVCRPLHYT) the chain is on the cytoplasmic side. A helical membrane pass occupies residues 135–155 (TTMTTGVCTILTIGSYTCGFL). The Extracellular segment spans residues 156–197 (NASIHAADTFKLSFCGSNKINHFFCDIPPLLALACSSTHISK). The chain crosses the membrane as a helical span at residues 198-218 (LVVFFVVGFNVFFTLLVIIIS). Residues 219 to 238 (YFFIYIAIQNMKSSEGRKKA) are Cytoplasmic-facing. The helical transmembrane segment at 239–259 (FSTCASHLTAVSIFYGTIIFM) threads the bilayer. The Extracellular segment spans residues 260–272 (YLQPSSGQSMDTD). Residues 273–293 (KIASVFYTVVIPMLNPLIYSL) form a helical membrane-spanning segment. Topologically, residues 294–319 (RNREVKSALWKILNRFYPASFSVSRK) are cytoplasmic.

Belongs to the G-protein coupled receptor 1 family.

The protein localises to the cell membrane. Odorant receptor. The protein is Olfactory receptor 5B21 of Mus musculus (Mouse).